We begin with the raw amino-acid sequence, 354 residues long: Homeobox protein Nkx-2.4 (354 aa).

A DNA-binding region (homeobox) is located at residues 189–248 (RRKRRVLFSQAQVYELERRFKQQKYLSAPEREHLASMIHLTPTQVKIWFQNHRYKMKRQA). A disordered region spans residues 246-329 (RQAKDKAAQQ…PALHGPGGGL (84 aa)). The segment covering 263 to 272 (GPPPPPPPSP) has biased composition (pro residues).

This sequence belongs to the NK-2 homeobox family.

The protein resides in the nucleus. In terms of biological role, probable transcription factor. In Homo sapiens (Human), this protein is Homeobox protein Nkx-2.4 (NKX2-4).